The primary structure comprises 115 residues: U3-lycotoxin-Ls1s (115 aa).

The signal sequence occupies residues 1–20; it reads MKFVLLFGVFLLTLFSYSSS. Residues 21-44 constitute a propeptide that is removed on maturation; the sequence is EMLDDFDQADEDELLSLIEKEEAR. 4 disulfides stabilise this stretch: Cys-48-Cys-63, Cys-55-Cys-72, Cys-62-Cys-87, and Cys-74-Cys-85.

Belongs to the neurotoxin 19 (CSTX) family. 01 subfamily. In terms of tissue distribution, expressed by the venom gland.

It is found in the secreted. In Lycosa singoriensis (Wolf spider), this protein is U3-lycotoxin-Ls1s.